The primary structure comprises 570 residues: Ferroportin (570 aa).

The Cytoplasmic portion of the chain corresponds to 1–23 (MTKARDQTHQEGCCGSLANYLTS). Residues 24–53 (AKFLLYLGHSLSTWGDRMWHFAVSVFLVEL) traverse the membrane as a helical segment. Asp-39 and His-43 together coordinate Fe cation. The Extracellular segment spans residues 54–57 (YGNS). The chain crosses the membrane as a helical span at residues 58-84 (LLLTAVYGLVVAGSVLVLGAIIGDWVD). At 85 to 87 (KNA) the chain is on the cytoplasmic side. Residues 88–118 (RLKVAQTSLVVQNVSVILCGIILMMVFLHKN) traverse the membrane as a helical segment. The Extracellular segment spans residues 119 to 126 (ELLTMYHG). Residues 127–162 (WVLTVCYILIITIANIANLASTATAITIQRDWIVVV) form a helical membrane-spanning segment. The Cytoplasmic segment spans residues 163–164 (AG). Residues 165-195 (ENRSRLADMNATIRRIDQLTNILAPMAVGQI) traverse the membrane as a helical segment. Over 196–202 (MTFGSPV) the chain is Extracellular. Residues 203–229 (IGCGFISGWNLVSMCVEYFLLWKVYQK) traverse the membrane as a helical segment. The Cytoplasmic segment spans residues 230–306 (TPALAVKAAL…DGWVSYYNQP (77 aa)). A helical transmembrane segment spans residues 307 to 333 (VFLAGMGLAFLYMTVLGFDCITTGYAY). Cys-326 contacts Fe cation. At 334-338 (TQGLS) the chain is on the extracellular side. The chain crosses the membrane as a helical span at residues 339-366 (GSILSILMGASAITGIMGTVAFTWLRRK). The Cytoplasmic portion of the chain corresponds to 367-368 (CG). A helical membrane pass occupies residues 369–391 (LVRTGLFSGLAQLSCLILCVISV). Topologically, residues 392-452 (FMPGSPLDLS…EMSTKPIPIV (61 aa)) are extracellular. N-linked (GlcNAc...) asparagine glycosylation occurs at Asn-437. Residues 453-482 (SVSLLFAGVIAARIGLWSFDLTVTQLLQEN) traverse the membrane as a helical segment. At 483 to 487 (VIESE) the chain is on the cytoplasmic side. A helical transmembrane segment spans residues 488–512 (RGIINGVQNSMNYLLDLLHFIMVIL). His-506 is a binding site for Fe cation. Residues 513–515 (APN) are Extracellular-facing. A helical transmembrane segment spans residues 516–541 (PEAFGLLVLISVSFVAMGHLMYFRFA). At 542-570 (QKTLGNQIFVCGPDEKEVTDENQPNTSVV) the chain is on the cytoplasmic side.

Belongs to the ferroportin (FP) (TC 2.A.100) family. SLC40A subfamily. As to quaternary structure, identified in a complex with STOM. Interacts with HAMP; affinity of the peptide hormone HAMP for SLC40A1 increases by 80-fold in the presence of iron and the interaction promotes SLC40A1 ubiquitination and degradation. Part of a complex composed of SLC40A1/ferroportin, TF/transferrin and HEPH/hephaestin that transfers iron from cells to transferrin. In terms of processing, polyubiquitinated by RNF217; leading to proteasomal degradation. Under conditions of high systemic iron levels, both the hormone peptide hepcidin/HAMP and holo(iron bound)-transferrin/TF induce the ubiquitination, internalization and proteasomal degradation of SLC40A1 to control iron release from cells. In terms of tissue distribution, high expression in spleen, liver, kidney, heart and duodenum.

The protein resides in the cell membrane. It is found in the basolateral cell membrane. It carries out the reaction Fe(2+)(in) = Fe(2+)(out). In terms of biological role, transports Fe(2+) from the inside of a cell to the outside of the cell, playing a key role for maintaining systemic iron homeostasis. Transports iron from intestinal, splenic, hepatic cells, macrophages and erythrocytes into the blood to provide iron to other tissues. Controls therefore dietary iron uptake, iron recycling by macrophages and erythrocytes, and release of iron stores in hepatocytes. When iron is in excess in serum, circulating HAMP/hepcidin levels increase resulting in a degradation of SLC40A1, thus limiting the iron efflux to plasma. The chain is Ferroportin from Mus musculus (Mouse).